We begin with the raw amino-acid sequence, 329 residues long: NADH-quinone oxidoreductase subunit H (329 aa).

9 consecutive transmembrane segments (helical) span residues 9–29, 42–62, 75–95, 117–137, 154–174, 188–208, 238–258, 269–291, and 309–329; these read LIKI…ATYI, GPCY…IKLF, FIFT…MAPI, IGFL…ILAG, IQLL…LMVV, GGFL…FLIA, LKWG…SFVI, WGFI…LSMW, and WKIM…IILI.

It belongs to the complex I subunit 1 family. In terms of assembly, NDH-1 is composed of 14 different subunits. Subunits NuoA, H, J, K, L, M, N constitute the membrane sector of the complex.

It is found in the cell inner membrane. The enzyme catalyses a quinone + NADH + 5 H(+)(in) = a quinol + NAD(+) + 4 H(+)(out). NDH-1 shuttles electrons from NADH, via FMN and iron-sulfur (Fe-S) centers, to quinones in the respiratory chain. The immediate electron acceptor for the enzyme in this species is believed to be ubiquinone. Couples the redox reaction to proton translocation (for every two electrons transferred, four hydrogen ions are translocated across the cytoplasmic membrane), and thus conserves the redox energy in a proton gradient. This subunit may bind ubiquinone. This is NADH-quinone oxidoreductase subunit H from Helicobacter pylori (strain Shi470).